The primary structure comprises 90 residues: Auxin-responsive protein SAUR22 (90 aa).

This sequence belongs to the ARG7 family.

The protein resides in the cell membrane. In terms of biological role, functions as a positive effector of cell expansion through modulation of auxin transport. This Arabidopsis thaliana (Mouse-ear cress) protein is Auxin-responsive protein SAUR22.